We begin with the raw amino-acid sequence, 198 residues long: Recombination protein RecR (198 aa).

A C4-type zinc finger spans residues 57-72 (CSVCGHITDQDPCYIC). The Toprim domain occupies 80-175 (SVICVVQDPK…KLSRIAHGLP (96 aa)).

It belongs to the RecR family.

Functionally, may play a role in DNA repair. It seems to be involved in an RecBC-independent recombinational process of DNA repair. It may act with RecF and RecO. The protein is Recombination protein RecR of Bacillus subtilis (strain 168).